We begin with the raw amino-acid sequence, 214 residues long: tRNA (guanine-N(7)-)-methyltransferase (214 aa).

S-adenosyl-L-methionine-binding residues include E43, E68, D95, and D117. D117 is an active-site residue. Residues K121, D153, and 191–194 (TEYE) contribute to the substrate site.

Belongs to the class I-like SAM-binding methyltransferase superfamily. TrmB family.

It carries out the reaction guanosine(46) in tRNA + S-adenosyl-L-methionine = N(7)-methylguanosine(46) in tRNA + S-adenosyl-L-homocysteine. Its pathway is tRNA modification; N(7)-methylguanine-tRNA biosynthesis. Functionally, catalyzes the formation of N(7)-methylguanine at position 46 (m7G46) in tRNA. The chain is tRNA (guanine-N(7)-)-methyltransferase from Brevibacillus brevis (strain 47 / JCM 6285 / NBRC 100599).